The primary structure comprises 265 residues: Membrane steroid-binding protein 2 (265 aa).

A helical membrane pass occupies residues 63–85 (WAAARSASPVAVIAAVAGAAVVY). The interval 94-116 (PPPPPARPREEPSEEAPPPPEPV) is disordered. One can recognise a Cytochrome b5 heme-binding domain in the interval 118–217 (VGEITAEELL…SKYVKVGTIK (100 aa)). Positions 120 to 217 (EITAEELLQY…SKYVKVGTIK (98 aa)) are steroid-binding.

The protein belongs to the cytochrome b5 family. MAPR subfamily.

It is found in the cell membrane. Binds multiple steroid compounds. The chain is Membrane steroid-binding protein 2 from Oryza sativa subsp. japonica (Rice).